Reading from the N-terminus, the 364-residue chain is Protein MGF 360-1L (364 aa).

It belongs to the asfivirus MGF 360 family.

Its function is as follows. Plays a role in virus cell tropism, and may be required for efficient virus replication in macrophages. This chain is Protein MGF 360-1L, found in Ornithodoros (relapsing fever ticks).